A 174-amino-acid polypeptide reads, in one-letter code: MSRVAKQPVPLPKGVEVHVADQRLVVKGPKGEMSVPFHPAVELRIDDGGASLTWSDNQNAQAGTMRAILNNMVQGVSQGYEQKLEIIGVGYRAQAKGKTLSLSLGFSHPVDYSVPDDITIETPTQTEIVIRGIDKQKIGQIAADIRAYRPPEPYKGKGVRYAGENVRRKEAKKK.

The protein belongs to the universal ribosomal protein uL6 family. As to quaternary structure, part of the 50S ribosomal subunit.

Functionally, this protein binds to the 23S rRNA, and is important in its secondary structure. It is located near the subunit interface in the base of the L7/L12 stalk, and near the tRNA binding site of the peptidyltransferase center. The protein is Large ribosomal subunit protein uL6 of Acidithiobacillus ferrooxidans (strain ATCC 23270 / DSM 14882 / CIP 104768 / NCIMB 8455) (Ferrobacillus ferrooxidans (strain ATCC 23270)).